A 470-amino-acid chain; its full sequence is Uronate isomerase (470 aa).

It belongs to the metallo-dependent hydrolases superfamily. Uronate isomerase family.

The catalysed reaction is D-glucuronate = D-fructuronate. The enzyme catalyses aldehydo-D-galacturonate = keto-D-tagaturonate. The protein operates within carbohydrate metabolism; pentose and glucuronate interconversion. The chain is Uronate isomerase from Cutibacterium acnes (strain DSM 16379 / KPA171202) (Propionibacterium acnes).